A 170-amino-acid polypeptide reads, in one-letter code: uncharacterized protein (170 aa).

The Cytoplasmic portion of the chain corresponds to 1–15 (MFLTSPFESCIVLSS). A helical transmembrane segment spans residues 16–36 (LIAGLLFSLSTGFVGILGVFA). Over 37–76 (SLFETELSVSPKRLSLSSLSWPKTFWALLSSVEGVSWESS) the chain is Extracellular. Residues 77 to 97 (LFACIVGCCFAVTVIASLSAS) traverse the membrane as a helical segment. Residues 98–119 (RVFGTVASSFRDSSCCCDSSPA) are Cytoplasmic-facing. The chain crosses the membrane as a helical span at residues 120 to 140 (VSVLATPATAALALLSLLLSL). At 141–170 (PCWSTSTEAFTVDPSPSVFSMLANRITIGL) the chain is on the extracellular side.

It localises to the membrane. This is an uncharacterized protein from Saccharomyces cerevisiae (strain ATCC 204508 / S288c) (Baker's yeast).